Here is a 449-residue protein sequence, read N- to C-terminus: Phosphomethylpyrimidine synthase (449 aa).

Substrate is bound by residues Asn-80, Met-109, Tyr-138, His-173, 193 to 195, 234 to 237, and Glu-273; these read SRG and DSLR. Residue His-277 participates in Zn(2+) binding. Tyr-300 is a binding site for substrate. His-341 contributes to the Zn(2+) binding site. Positions 421, 424, and 429 each coordinate [4Fe-4S] cluster.

The protein belongs to the ThiC family. As to quaternary structure, homodimer. [4Fe-4S] cluster serves as cofactor.

It carries out the reaction 5-amino-1-(5-phospho-beta-D-ribosyl)imidazole + S-adenosyl-L-methionine = 4-amino-2-methyl-5-(phosphooxymethyl)pyrimidine + CO + 5'-deoxyadenosine + formate + L-methionine + 3 H(+). Its pathway is cofactor biosynthesis; thiamine diphosphate biosynthesis. Its function is as follows. Catalyzes the synthesis of the hydroxymethylpyrimidine phosphate (HMP-P) moiety of thiamine from aminoimidazole ribotide (AIR) in a radical S-adenosyl-L-methionine (SAM)-dependent reaction. The protein is Phosphomethylpyrimidine synthase of Campylobacter hominis (strain ATCC BAA-381 / DSM 21671 / CCUG 45161 / LMG 19568 / NCTC 13146 / CH001A).